We begin with the raw amino-acid sequence, 460 residues long: Glutamate--tRNA ligase 2 (460 aa).

A 'HIGH' region motif is present at residues 8–18; it reads PSPTGFLHVGG. The 'KMSKS' region motif lies at 237-241; that stretch reads KLSKR. Lysine 240 is a binding site for ATP.

This sequence belongs to the class-I aminoacyl-tRNA synthetase family. Glutamate--tRNA ligase type 1 subfamily. As to quaternary structure, monomer.

It localises to the cytoplasm. The catalysed reaction is tRNA(Glu) + L-glutamate + ATP = L-glutamyl-tRNA(Glu) + AMP + diphosphate. In terms of biological role, catalyzes the attachment of glutamate to tRNA(Glu) in a two-step reaction: glutamate is first activated by ATP to form Glu-AMP and then transferred to the acceptor end of tRNA(Glu). This is Glutamate--tRNA ligase 2 from Campylobacter fetus subsp. fetus (strain 82-40).